We begin with the raw amino-acid sequence, 190 residues long: Segregation and condensation protein B (190 aa).

This sequence belongs to the ScpB family. As to quaternary structure, homodimer. Homodimerization may be required to stabilize the binding of ScpA to the Smc head domains. Component of a cohesin-like complex composed of ScpA, ScpB and the Smc homodimer, in which ScpA and ScpB bind to the head domain of Smc. The presence of the three proteins is required for the association of the complex with DNA.

The protein resides in the cytoplasm. Participates in chromosomal partition during cell division. May act via the formation of a condensin-like complex containing Smc and ScpA that pull DNA away from mid-cell into both cell halves. In Bacillus cereus (strain AH187), this protein is Segregation and condensation protein B.